The primary structure comprises 226 residues: ATP synthase F(0) complex subunit a (226 aa).

The next 6 helical transmembrane spans lie at 11-31 (APTILGQPATIPIIMFPTLLI), 68-88 (WSLMLMSLITFITMTNLLGLL), 97-117 (QLSMNLAMAIPLWAGTIITGL), 138-158 (IPMLVMIETISLLIQPMALAV), 164-184 (ITAGHLLMHLIGNTMLTLSTI), and 194-214 (VLLMLLTILEIAVALIQAYVF).

This sequence belongs to the ATPase A chain family. Component of the ATP synthase complex composed at least of ATP5F1A/subunit alpha, ATP5F1B/subunit beta, ATP5MC1/subunit c (homooctomer), MT-ATP6/subunit a, MT-ATP8/subunit 8, ATP5ME/subunit e, ATP5MF/subunit f, ATP5MG/subunit g, ATP5MK/subunit k, ATP5MJ/subunit j, ATP5F1C/subunit gamma, ATP5F1D/subunit delta, ATP5F1E/subunit epsilon, ATP5PF/subunit F6, ATP5PB/subunit b, ATP5PD/subunit d, ATP5PO/subunit OSCP. ATP synthase complex consists of a soluble F(1) head domain (subunits alpha(3) and beta(3)) - the catalytic core - and a membrane F(0) domain - the membrane proton channel (subunits c, a, 8, e, f, g, k and j). These two domains are linked by a central stalk (subunits gamma, delta, and epsilon) rotating inside the F1 region and a stationary peripheral stalk (subunits F6, b, d, and OSCP). Interacts with DNAJC30; interaction is direct.

It localises to the mitochondrion inner membrane. It carries out the reaction H(+)(in) = H(+)(out). Subunit a, of the mitochondrial membrane ATP synthase complex (F(1)F(0) ATP synthase or Complex V) that produces ATP from ADP in the presence of a proton gradient across the membrane which is generated by electron transport complexes of the respiratory chain. ATP synthase complex consist of a soluble F(1) head domain - the catalytic core - and a membrane F(1) domain - the membrane proton channel. These two domains are linked by a central stalk rotating inside the F(1) region and a stationary peripheral stalk. During catalysis, ATP synthesis in the catalytic domain of F(1) is coupled via a rotary mechanism of the central stalk subunits to proton translocation. With the subunit c (ATP5MC1), forms the proton-conducting channel in the F(0) domain, that contains two crucial half-channels (inlet and outlet) that facilitate proton movement from the mitochondrial intermembrane space (IMS) into the matrix. Protons are taken up via the inlet half-channel and released through the outlet half-channel, following a Grotthuss mechanism. The chain is ATP synthase F(0) complex subunit a from Papio hamadryas (Hamadryas baboon).